The chain runs to 443 residues: Endothelin receptor type B (443 aa).

The first 26 residues, 1 to 26 (MQPLPTLCGRVLVALILACGVAGVQG), serve as a signal peptide directing secretion. Topologically, residues 27-102 (EERRFPPARA…RTIEIKETFK (76 aa)) are extracellular. The segment covering 51–62 (TKTSWPTGSNAS) has biased composition (polar residues). The interval 51-89 (TKTSWPTGSNASVPRLSAPPQMPKAGRTAGAQRRTLPPP) is disordered. Residue Asn60 is glycosylated (N-linked (GlcNAc...) asparagine). A helical membrane pass occupies residues 103-127 (YINTVVSCLVFVLGIIGNSTLLRII). The Cytoplasmic portion of the chain corresponds to 128 to 138 (YKNKCMRNGPN). The chain crosses the membrane as a helical span at residues 139 to 164 (ILIASLALGDLLHIIIDIPINVYKLL). At 165 to 176 (AEDWPFGVEMCK) the chain is on the extracellular side. Cysteines 175 and 256 form a disulfide. The chain crosses the membrane as a helical span at residues 177–198 (LVPFIQKASVGITVLSLCALSI). Over 199-219 (DRYRAVASWSRIKGIGVPKWT) the chain is Cytoplasmic. A helical membrane pass occupies residues 220-244 (AVEIVLIWVVSVVLAVPEAVGFDMI). The Extracellular segment spans residues 245-272 (TADYKGSYLRICLLHPTQKTAFMQFYKN). Residues 273 to 297 (AKDWWLFSFYFCLPLAITAFFYTLE) traverse the membrane as a helical segment. Over 298-325 (TCEMLRKKSGMQIALNDHLKQRREVAKT) the chain is Cytoplasmic. Ser306 is subject to Phosphoserine. The helical transmembrane segment at 326 to 351 (VFCLVLVFALCWLPLHLSRILKHTLY) threads the bilayer. The Extracellular segment spans residues 352 to 363 (DQNDPHRCELLS). Residues 364–390 (FLLVLEYIGINMASLNSCINPIALYLV) form a helical membrane-spanning segment. The Cytoplasmic segment spans residues 391–443 (SKRFKNCFKWCLCCWCQSFEEKQSLEDKQSCLKFKANDHGYDNFRSSNKYSSS). Residues Cys403, Cys404, and Cys406 are each lipidated (S-palmitoyl cysteine). Position 420 is a phosphoserine (Ser420). Residue Tyr440 is modified to Phosphotyrosine. 3 positions are modified to phosphoserine: Ser441, Ser442, and Ser443.

The protein belongs to the G-protein coupled receptor 1 family. Endothelin receptor subfamily. EDNRB sub-subfamily.

Its subcellular location is the cell membrane. In terms of biological role, non-specific receptor for endothelin 1, 2, and 3. Mediates its action by association with G proteins that activate a phosphatidylinositol-calcium second messenger system. In Equus caballus (Horse), this protein is Endothelin receptor type B (EDNRB).